A 466-amino-acid polypeptide reads, in one-letter code: Ribulose bisphosphate carboxylase large chain (466 aa).

Residue lysine 4 is modified to N6,N6,N6-trimethyllysine. Asparagine 113 and threonine 163 together coordinate substrate. The active-site Proton acceptor is the lysine 165. Lysine 167 serves as a coordination point for substrate. Residues lysine 191, aspartate 193, and glutamate 194 each contribute to the Mg(2+) site. At lysine 191 the chain carries N6-carboxylysine. Histidine 284 acts as the Proton acceptor in catalysis. Arginine 285, histidine 317, and serine 369 together coordinate substrate.

Belongs to the RuBisCO large chain family. Type I subfamily. Heterohexadecamer of 8 large chains and 8 small chains; disulfide-linked. The disulfide link is formed within the large subunit homodimers. Mg(2+) serves as cofactor. The disulfide bond which can form in the large chain dimeric partners within the hexadecamer appears to be associated with oxidative stress and protein turnover.

It is found in the plastid. The protein resides in the chloroplast. It catalyses the reaction 2 (2R)-3-phosphoglycerate + 2 H(+) = D-ribulose 1,5-bisphosphate + CO2 + H2O. The enzyme catalyses D-ribulose 1,5-bisphosphate + O2 = 2-phosphoglycolate + (2R)-3-phosphoglycerate + 2 H(+). In terms of biological role, ruBisCO catalyzes two reactions: the carboxylation of D-ribulose 1,5-bisphosphate, the primary event in carbon dioxide fixation, as well as the oxidative fragmentation of the pentose substrate in the photorespiration process. Both reactions occur simultaneously and in competition at the same active site. The polypeptide is Ribulose bisphosphate carboxylase large chain (Proboscidea louisianica (Louisiana Devil's-claw)).